Reading from the N-terminus, the 331-residue chain is Methionyl-tRNA formyltransferase (331 aa).

111-114 lines the (6S)-5,6,7,8-tetrahydrofolate pocket; it reads SLLP.

It belongs to the Fmt family.

The enzyme catalyses L-methionyl-tRNA(fMet) + (6R)-10-formyltetrahydrofolate = N-formyl-L-methionyl-tRNA(fMet) + (6S)-5,6,7,8-tetrahydrofolate + H(+). In terms of biological role, attaches a formyl group to the free amino group of methionyl-tRNA(fMet). The formyl group appears to play a dual role in the initiator identity of N-formylmethionyl-tRNA by promoting its recognition by IF2 and preventing the misappropriation of this tRNA by the elongation apparatus. This Thermosynechococcus vestitus (strain NIES-2133 / IAM M-273 / BP-1) protein is Methionyl-tRNA formyltransferase.